Reading from the N-terminus, the 514-residue chain is Threonine synthase (514 aa).

Lys117 carries the post-translational modification N6-(pyridoxal phosphate)lysine. Pyridoxal 5'-phosphate is bound by residues Gly270, Asn271, Phe272, and Asp274. A phosphoserine mark is found at Ser319 and Ser321. Thr449 serves as a coordination point for pyridoxal 5'-phosphate.

Belongs to the threonine synthase family. Pyridoxal 5'-phosphate is required as a cofactor.

The enzyme catalyses O-phospho-L-homoserine + H2O = L-threonine + phosphate. The protein operates within amino-acid biosynthesis; L-threonine biosynthesis; L-threonine from L-aspartate: step 5/5. Catalyzes the gamma-elimination of phosphate from L-phosphohomoserine and the beta-addition of water to produce L-threonine. The polypeptide is Threonine synthase (thrc) (Schizosaccharomyces pombe (strain 972 / ATCC 24843) (Fission yeast)).